The chain runs to 477 residues: Fibrinogen beta chain (477 aa).

Positions glutamate 1–lysine 76 are disordered. Tyrosine 13 bears the Sulfotyrosine mark. Asparagine 27 carries N-linked (GlcNAc...) asparagine glycosylation. Positions arginine 44–leucine 55 are enriched in basic residues. 3 cysteine pairs are disulfide-bonded: cysteine 220–cysteine 304, cysteine 230–cysteine 259, and cysteine 412–cysteine 425. Positions arginine 221–tryptophan 476 constitute a Fibrinogen C-terminal domain.

Heterohexamer; disulfide linked. Contains 2 sets of 3 non-identical chains (alpha, beta and gamma). The 2 heterotrimers are in head to head conformation with the N-termini in a small central domain. Conversion of fibrinogen to fibrin is triggered by thrombin, which cleaves fibrinopeptides A and B from alpha and beta chains, and thus exposes the N-terminal polymerization sites responsible for the formation of the soft clot. The soft clot is converted into the hard clot by factor XIIIA which catalyzes the epsilon-(gamma-glutamyl)lysine cross-linking between gamma chains (stronger) and between alpha chains (weaker) of different monomers.

Its subcellular location is the secreted. Its function is as follows. Fibrinogen has a double function: yielding monomers that polymerize into fibrin and acting as a cofactor in platelet aggregation. This is Fibrinogen beta chain from Petromyzon marinus (Sea lamprey).